Here is a 568-residue protein sequence, read N- to C-terminus: Oxygen-dependent choline dehydrogenase (568 aa).

8–37 (DYIIIGAGSAGNTLAARLTEDAGVTVLLLE) lines the FAD pocket. Residue histidine 477 is the Proton acceptor of the active site.

Belongs to the GMC oxidoreductase family. FAD is required as a cofactor.

It carries out the reaction choline + A = betaine aldehyde + AH2. The catalysed reaction is betaine aldehyde + NAD(+) + H2O = glycine betaine + NADH + 2 H(+). Its pathway is amine and polyamine biosynthesis; betaine biosynthesis via choline pathway; betaine aldehyde from choline (cytochrome c reductase route): step 1/1. In terms of biological role, involved in the biosynthesis of the osmoprotectant glycine betaine. Catalyzes the oxidation of choline to betaine aldehyde and betaine aldehyde to glycine betaine at the same rate. This is Oxygen-dependent choline dehydrogenase from Pseudomonas savastanoi pv. phaseolicola (strain 1448A / Race 6) (Pseudomonas syringae pv. phaseolicola (strain 1448A / Race 6)).